A 587-amino-acid chain; its full sequence is ATP-dependent lipid A-core flippase (587 aa).

5 helical membrane passes run 31–51 (LIASGIALVFNALADSGLIYL), 68–88 (LKIMAFVVVGMIILRGVTNFI), 145–165 (GSLITIVREGAYIISLLAVMF), 169–189 (WELTLVLFVIGPIIAVLITIV), and 259–279 (VQIIASLALVAVLFLATTPLI). In terms of domain architecture, ABC transmembrane type-1 spans 32–315 (IASGIALVFN…LTNVNSQFQR (284 aa)). One can recognise an ABC transporter domain in the interval 347-583 (LEFKNVSFAY…NGAYKQLYSM (237 aa)). An ATP-binding site is contributed by 381-388 (GRSGSGKS).

The protein belongs to the ABC transporter superfamily. Lipid exporter (TC 3.A.1.106) family. In terms of assembly, homodimer.

It localises to the cell inner membrane. The catalysed reaction is ATP + H2O + lipid A-core oligosaccharideSide 1 = ADP + phosphate + lipid A-core oligosaccharideSide 2.. Its function is as follows. Involved in lipopolysaccharide (LPS) biosynthesis. Translocates lipid A-core from the inner to the outer leaflet of the inner membrane. Transmembrane domains (TMD) form a pore in the inner membrane and the ATP-binding domain (NBD) is responsible for energy generation. The chain is ATP-dependent lipid A-core flippase from Haemophilus influenzae (strain 86-028NP).